The sequence spans 138 residues: Cysteine desulfuration protein SufE (138 aa).

Cys51 serves as the catalytic Cysteine persulfide intermediate.

The protein belongs to the SufE family. As to quaternary structure, homodimer. Interacts with SufS.

It localises to the cytoplasm. Its pathway is cofactor biosynthesis; iron-sulfur cluster biosynthesis. Its function is as follows. Participates in cysteine desulfuration mediated by SufS. Cysteine desulfuration mobilizes sulfur from L-cysteine to yield L-alanine and constitutes an essential step in sulfur metabolism for biosynthesis of a variety of sulfur-containing biomolecules. Functions as a sulfur acceptor for SufS, by mediating the direct transfer of the sulfur atom from the S-sulfanylcysteine of SufS, an intermediate product of cysteine desulfuration process. The sequence is that of Cysteine desulfuration protein SufE from Pectobacterium atrosepticum (strain SCRI 1043 / ATCC BAA-672) (Erwinia carotovora subsp. atroseptica).